The primary structure comprises 174 residues: NADH-quinone oxidoreductase subunit B 1 (174 aa).

Cys-53, Cys-54, Cys-118, and Cys-148 together coordinate [4Fe-4S] cluster.

The protein belongs to the complex I 20 kDa subunit family. NDH-1 is composed of 14 different subunits. Subunits NuoB, C, D, E, F, and G constitute the peripheral sector of the complex. [4Fe-4S] cluster serves as cofactor.

Its subcellular location is the cell inner membrane. The enzyme catalyses a quinone + NADH + 5 H(+)(in) = a quinol + NAD(+) + 4 H(+)(out). In terms of biological role, NDH-1 shuttles electrons from NADH, via FMN and iron-sulfur (Fe-S) centers, to quinones in the respiratory chain. The immediate electron acceptor for the enzyme in this species is believed to be ubiquinone. Couples the redox reaction to proton translocation (for every two electrons transferred, four hydrogen ions are translocated across the cytoplasmic membrane), and thus conserves the redox energy in a proton gradient. This is NADH-quinone oxidoreductase subunit B 1 from Cereibacter sphaeroides (strain KD131 / KCTC 12085) (Rhodobacter sphaeroides).